The chain runs to 208 residues: NAD(P)H-quinone oxidoreductase subunit I (208 aa).

2 4Fe-4S ferredoxin-type domains span residues 55–84 (GRIH…VDWV) and 95–124 (RNYS…MTEE). Residues Cys64, Cys67, Cys70, Cys74, Cys104, Cys107, Cys110, and Cys114 each coordinate [4Fe-4S] cluster.

This sequence belongs to the complex I 23 kDa subunit family. As to quaternary structure, NDH-1 is composed of at least 11 different subunits. Requires [4Fe-4S] cluster as cofactor.

It localises to the cellular thylakoid membrane. The catalysed reaction is a plastoquinone + NADH + (n+1) H(+)(in) = a plastoquinol + NAD(+) + n H(+)(out). It carries out the reaction a plastoquinone + NADPH + (n+1) H(+)(in) = a plastoquinol + NADP(+) + n H(+)(out). NDH-1 shuttles electrons from an unknown electron donor, via FMN and iron-sulfur (Fe-S) centers, to quinones in the respiratory and/or the photosynthetic chain. The immediate electron acceptor for the enzyme in this species is believed to be plastoquinone. Couples the redox reaction to proton translocation, and thus conserves the redox energy in a proton gradient. The chain is NAD(P)H-quinone oxidoreductase subunit I from Prochlorococcus marinus (strain AS9601).